The following is a 1628-amino-acid chain: THO complex subunit 2 (1628 aa).

Composition is skewed to basic and acidic residues over residues 1–10 (MTSLPEKDQQ) and 1360–1399 (TDNK…EGNR). 2 disordered regions span residues 1–21 (MTSL…NQKK) and 1337–1628 (VALN…RKIQ). T1406 and T1408 each carry phosphothreonine. Residues 1411–1429 (DIQRSDSKLREDQSRDRTP) show a composition bias toward basic and acidic residues. The span at 1430-1444 (QSRSFTNENNDNLRS) shows a compositional bias: polar residues. Basic and acidic residues predominate over residues 1461-1474 (ARREHESQKSDRWR). Positions 1476 to 1493 (NGNVNRNPRVSNNNSTNV) are enriched in low complexity. Basic and acidic residues predominate over residues 1494 to 1526 (SRERSSEANHRTSNDNKRDEVTEGKDKNKRQDI). The segment covering 1527–1550 (SGESNSRQNNAISRAGRSNGSNRG) has biased composition (polar residues). Residues 1551–1560 (NDSRDADGRR) show a composition bias toward basic and acidic residues. The residue at position 1577 (S1577) is a Phosphoserine. A compositionally biased stretch (basic and acidic residues) spans 1581–1628 (LREEDERENSRRRARQDDRRDRDSRQQRDRPRDRTSRSAREEKRRKIQ).

The protein belongs to the THOC2 family. In terms of assembly, component of the THO complex. THO associates with DNA and RNA in vitro.

It localises to the nucleus. In terms of biological role, component the THO subcomplex of the TREX complex, which operates in coupling transcription elongation to mRNA export. The THO complex is recruited to transcribed genes and moves along the gene with the elongating polymerase during transcription. THO is important for stabilizing nascent RNA in the RNA polymerase II elongation complex by preventing formation of DNA:RNA hybrids behind the elongating polymerase. The polypeptide is THO complex subunit 2 (tho2) (Schizosaccharomyces pombe (strain 972 / ATCC 24843) (Fission yeast)).